Reading from the N-terminus, the 2091-residue chain is Protein Ycf2 (2091 aa).

A disordered region spans residues 191–210 (DSSQLKGSSDQSRDPLDSIS). 1432 to 1439 (GSIGTGRS) lines the ATP pocket.

The protein belongs to the Ycf2 family.

The protein resides in the plastid. The protein localises to the chloroplast stroma. Functionally, probable ATPase of unknown function. Its presence in a non-photosynthetic plant (Epifagus virginiana) and experiments in tobacco indicate that it has an essential function which is probably not related to photosynthesis. The chain is Protein Ycf2 from Daucus carota (Wild carrot).